The sequence spans 181 residues: Putative ankyrin repeat protein RF_0782 (181 aa).

ANK repeat units follow at residues 24–53 (YHYS…DINF) and 54–83 (GSTP…NTQI).

The protein is Putative ankyrin repeat protein RF_0782 of Rickettsia felis (strain ATCC VR-1525 / URRWXCal2) (Rickettsia azadi).